Consider the following 785-residue polypeptide: Probable splicing factor 3A subunit 1 (785 aa).

The residue at position 1 (M1) is an N-acetylmethionine. Residues M1–N42 form a disordered region. One copy of the SURP motif 1 repeat lies at I71 to Y113. Positions N124–P175 are disordered. One copy of the SURP motif 2 repeat lies at I193–F235. Disordered stretches follow at residues N522 to I554 and R639 to N713. 2 stretches are compositionally biased toward pro residues: residues A543–I554 and Q653–P674. Basic and acidic residues predominate over residues P677–E686. A Ubiquitin-like domain is found at V707–G782.

Component of splicing factor SF3A which is composed of three subunits.

It localises to the nucleus. This is Probable splicing factor 3A subunit 1 from Arabidopsis thaliana (Mouse-ear cress).